The chain runs to 141 residues: Large ribosomal subunit protein bL17 (141 aa).

The protein belongs to the bacterial ribosomal protein bL17 family. In terms of assembly, part of the 50S ribosomal subunit. Contacts protein L32.

The polypeptide is Large ribosomal subunit protein bL17 (Sinorhizobium medicae (strain WSM419) (Ensifer medicae)).